The primary structure comprises 322 residues: Ferrochelatase (322 aa).

2 residues coordinate Fe cation: H193 and E274.

This sequence belongs to the ferrochelatase family.

The protein localises to the cytoplasm. It catalyses the reaction heme b + 2 H(+) = protoporphyrin IX + Fe(2+). Its pathway is porphyrin-containing compound metabolism; protoheme biosynthesis; protoheme from protoporphyrin-IX: step 1/1. Catalyzes the ferrous insertion into protoporphyrin IX. The polypeptide is Ferrochelatase (Photobacterium profundum (strain SS9)).